Reading from the N-terminus, the 453-residue chain is Ribosomal protein uS12 methylthiotransferase RimO (453 aa).

Positions 6–116 (PTVGIVSLGC…VLTAVHEAIA (111 aa)) constitute an MTTase N-terminal domain. The [4Fe-4S] cluster site is built by Cys15, Cys51, Cys80, Cys148, Cys152, and Cys155. The region spanning 134–371 (LTPKHFAYLK…MQLQQQISAN (238 aa)) is the Radical SAM core domain. The TRAM domain maps to 374 to 440 (QAKIGKTIQV…EYDLWATPVG (67 aa)).

This sequence belongs to the methylthiotransferase family. RimO subfamily. Requires [4Fe-4S] cluster as cofactor.

It is found in the cytoplasm. It carries out the reaction L-aspartate(89)-[ribosomal protein uS12]-hydrogen + (sulfur carrier)-SH + AH2 + 2 S-adenosyl-L-methionine = 3-methylsulfanyl-L-aspartate(89)-[ribosomal protein uS12]-hydrogen + (sulfur carrier)-H + 5'-deoxyadenosine + L-methionine + A + S-adenosyl-L-homocysteine + 2 H(+). In terms of biological role, catalyzes the methylthiolation of an aspartic acid residue of ribosomal protein uS12. This chain is Ribosomal protein uS12 methylthiotransferase RimO, found in Hydrogenovibrio crunogenus (strain DSM 25203 / XCL-2) (Thiomicrospira crunogena).